Reading from the N-terminus, the 433-residue chain is GTPase Obg (433 aa).

An Obg domain is found at 1–159 (MGLTDYCECR…LHVSLEIKYL (159 aa)). The OBG-type G domain occupies 160–329 (ANVGIVGFPN…LVAQVFALHQ (170 aa)). Residues 166–173 (GFPNTGKS), 191–195 (FTTLV), 212–215 (DIPG), 282–285 (NKTD), and 310–312 (ISA) each bind GTP. Residues Ser173 and Thr193 each coordinate Mg(2+). One can recognise an OCT domain in the interval 355–433 (ASETDHDPLN…FAGQEFVIND (79 aa)).

Belongs to the TRAFAC class OBG-HflX-like GTPase superfamily. OBG GTPase family. As to quaternary structure, monomer. The cofactor is Mg(2+).

Its subcellular location is the cytoplasm. Functionally, an essential GTPase which binds GTP, GDP and possibly (p)ppGpp with moderate affinity, with high nucleotide exchange rates and a fairly low GTP hydrolysis rate. Plays a role in control of the cell cycle, stress response, ribosome biogenesis and in those bacteria that undergo differentiation, in morphogenesis control. This is GTPase Obg from Mycoplasma pneumoniae (strain ATCC 29342 / M129 / Subtype 1) (Mycoplasmoides pneumoniae).